Reading from the N-terminus, the 329-residue chain is MADKSTEVEKAIDPIIDLGNLLFIDREPLQGDAEEGLEERARKNTQLLFNNIWQLEQKRVEEAIIVTLPAATYRLPREKKLPEKKEPTKWEKYAKEKGIEKRKKDKKVFDEATKEWKPTYGYRRGNDNTKDWLIEIPDNAEDPNKDFFAERREKKKERVAKNEMQRMKNLARQMKTTVKTGPSTDKMIGVGIDAKDKSKQDVRFAVDRAKLATASAGKFQEGLKGEKANIKTGKKRKFESNEAPVSAEKERALQILQRMKSKKAKIVEEKASAVAGPLREKKEKQEKKGAKEATRQKSQIHRQQWFKNKVDSKKKGTGGAKKKGANKRK.

Disordered stretches follow at residues 227 to 248 and 262 to 329; these read KANI…VSAE and KKAK…NKRK. Residues 278–295 show a composition bias toward basic and acidic residues; it reads LREKKEKQEKKGAKEATR. The segment covering 320–329 has biased composition (basic residues); that stretch reads AKKKGANKRK.

Belongs to the RRS1 family.

Its subcellular location is the nucleus. It is found in the nucleolus. Its function is as follows. Involved in ribosomal large subunit assembly. This is Ribosome biogenesis regulatory protein homolog from Caenorhabditis briggsae.